The primary structure comprises 100 residues: NADH-quinone oxidoreductase subunit K (100 aa).

3 helical membrane passes run 4–24 (LSHG…SLVM), 28–48 (ILFM…ALVV), and 60–80 (IMYI…LALL).

The protein belongs to the complex I subunit 4L family. NDH-1 is composed of 13 different subunits. Subunits NuoA, H, J, K, L, M, N constitute the membrane sector of the complex.

The protein resides in the cell membrane. It catalyses the reaction a quinone + NADH + 5 H(+)(in) = a quinol + NAD(+) + 4 H(+)(out). NDH-1 shuttles electrons from NADH, via FMN and iron-sulfur (Fe-S) centers, to quinones in the respiratory chain. The immediate electron acceptor for the enzyme in this species is believed to be ubiquinone. Couples the redox reaction to proton translocation (for every two electrons transferred, four hydrogen ions are translocated across the cytoplasmic membrane), and thus conserves the redox energy in a proton gradient. The protein is NADH-quinone oxidoreductase subunit K of Buchnera aphidicola subsp. Baizongia pistaciae (strain Bp).